Here is a 215-residue protein sequence, read N- to C-terminus: Histidine biosynthesis bifunctional protein HisIE (215 aa).

The interval Met1–Ile118 is phosphoribosyl-AMP cyclohydrolase. Residues Ile119–Glu215 are phosphoribosyl-ATP pyrophosphohydrolase.

The protein in the N-terminal section; belongs to the PRA-CH family. It in the C-terminal section; belongs to the PRA-PH family.

The protein resides in the cytoplasm. It carries out the reaction 1-(5-phospho-beta-D-ribosyl)-ATP + H2O = 1-(5-phospho-beta-D-ribosyl)-5'-AMP + diphosphate + H(+). The catalysed reaction is 1-(5-phospho-beta-D-ribosyl)-5'-AMP + H2O = 1-(5-phospho-beta-D-ribosyl)-5-[(5-phospho-beta-D-ribosylamino)methylideneamino]imidazole-4-carboxamide. Its pathway is amino-acid biosynthesis; L-histidine biosynthesis; L-histidine from 5-phospho-alpha-D-ribose 1-diphosphate: step 2/9. It participates in amino-acid biosynthesis; L-histidine biosynthesis; L-histidine from 5-phospho-alpha-D-ribose 1-diphosphate: step 3/9. The sequence is that of Histidine biosynthesis bifunctional protein HisIE from Oceanobacillus iheyensis (strain DSM 14371 / CIP 107618 / JCM 11309 / KCTC 3954 / HTE831).